The sequence spans 197 residues: Putative double homeobox protein 3 (197 aa).

2 DNA-binding regions (homeobox) span residues 46-105 (GRRM…LRQH) and 121-180 (GRRK…WGQS). Residues 102–127 (LRQHRRQSRPWPGRRDPQKGRRKRTA) are disordered.

The protein belongs to the paired homeobox family. In terms of tissue distribution, expressed in hepatoma Hep3B cells.

The protein resides in the nucleus. The protein is Putative double homeobox protein 3 (DUX3) of Homo sapiens (Human).